The sequence spans 749 residues: Semaphorin-3B (749 aa).

The first 24 residues, 1–24 (MGRAGAAAVIPGLALLWAVGLGSA), serve as a signal peptide directing secretion. A Sema domain is found at 30-513 (RLRLSFQELQ…SRSAVAQIAL (484 aa)). Asparagine 82 is a glycosylation site (N-linked (GlcNAc...) asparagine). A disulfide bridge links cysteine 102 with cysteine 113. Asparagine 124 is a glycosylation site (N-linked (GlcNAc...) asparagine). 3 disulfides stabilise this stretch: cysteine 131–cysteine 140, cysteine 269–cysteine 380, and cysteine 293–cysteine 340. Residue asparagine 427 is glycosylated (N-linked (GlcNAc...) asparagine). 2 cysteine pairs are disulfide-bonded: cysteine 516–cysteine 534 and cysteine 644–cysteine 710. The Ig-like C2-type domain maps to 573–659 (PALLEHKVFG…GFTQPLRRLS (87 aa)). The segment at 702-749 (GSANSLRMCRPQPALQSLPLESRRKGRNRRTHAPEPRAERGPRSATHW) is disordered. The span at 733-743 (HAPEPRAERGP) shows a compositional bias: basic and acidic residues.

It belongs to the semaphorin family. In terms of tissue distribution, expressed abundantly but differentially in a variety of neural and nonneural tissues.

Its subcellular location is the secreted. It localises to the endoplasmic reticulum. Its function is as follows. Inhibits axonal extension by providing local signals to specify territories inaccessible for growing axons. The polypeptide is Semaphorin-3B (SEMA3B) (Homo sapiens (Human)).